A 709-amino-acid polypeptide reads, in one-letter code: RxLR effector protein PITG_15110 (709 aa).

Positions 1–18 are cleaved as a signal peptide; it reads MHAYSAAVLMGLLMVAEG. The RxLR-dEER signature appears at 51 to 66; sequence RLLREPETTEASNEDR.

Belongs to the RxLR effector family.

It localises to the secreted. It is found in the host cytoplasm. The protein resides in the host cytoskeleton. In terms of biological role, effector that enhances P.infestans colonization of Nicotiana benthamiana leaves. This is RxLR effector protein PITG_15110 from Phytophthora infestans (strain T30-4) (Potato late blight agent).